The primary structure comprises 706 residues: Zinc finger and BTB domain-containing protein 17 (706 aa).

Residues 1-12 enclose the BTB domain; sequence LKSLTVLAESPV. Positions 32-194 are disordered; it reads TAARVTQGDS…LLRSGTYSDR (163 aa). Positions 67 to 78 are enriched in basic and acidic residues; it reads EPAEQPDAKEGP. Residues 90 to 106 show a composition bias toward low complexity; it reads AAEASPAAVSPSRPQPA. The segment covering 134 to 148 has biased composition (acidic residues); that stretch reads GKEEEGEAMVEDEEE. The span at 170-182 shows a compositional bias: polar residues; that stretch reads SGSTDSGQENSGE. 13 C2H2-type zinc fingers span residues 205-227, 233-255, 261-283, 289-311, 317-339, 345-367, 373-395, 401-423, 427-450, 457-479, 485-507, 513-536, and 618-640; these read HKCEDCGKEFTHTGNFKRHIRIH, FSCRECNKAFSDPAACKAHEKTH, YGCEECGKSYRLISLLNLHKKRH, YRCDDCGKLFTTSGNLKRHQLVH, YQCDYCGRSFSDPTSKMRHLETH, HKCPHCDKKFNQVGNLKAHLKIH, LKCRECGNEFTTSGNLKRHLRIH, YVCVHCQRQFADPGALQAHVPIH, KPCQCLICGKAFTQASSLIAHVRH, YVCERCGKRFVQSSQLANHIRHH, HKCTVCNKAFVNVGDLSKHIIIH, FLCDKCGRGFNRVDNLRSHVKTVH, and YACDSCGEKFLDATSLAQHVRIH. The disordered stretch occupies residues 680 to 706; it reads PRDSPQEAPAAPLAPVPLAGEGQAPAE. The span at 687–698 shows a compositional bias: low complexity; that stretch reads APAAPLAPVPLA.

It belongs to the krueppel C2H2-type zinc-finger protein family.

The protein resides in the nucleus. Transcription factor that can function as an activator or repressor depending on its binding partners, and by targeting negative regulators of cell cycle progression. Plays a critical role in early lymphocyte development, where it is essential to prevent apoptosis in lymphoid precursors, allowing them to survive in response to IL7 and undergo proper lineage commitment. Has been shown to bind to the promoters of adenovirus major late protein and cyclin D1 and activate transcription. Required for early embryonic development during gastrulation. Represses RB1 transcription. This is Zinc finger and BTB domain-containing protein 17 (ZBTB17) from Gallus gallus (Chicken).